The chain runs to 583 residues: ATP-dependent lipid A-core flippase (583 aa).

Transmembrane regions (helical) follow at residues 27–47, 69–89, 142–162, 165–185, and 249–269; these read LAVA…MVSL, LLVF…TYCL, ALVS…LMFY, WQLS…IGFV, and AAAN…VLYL. The ABC transmembrane type-1 domain maps to 28-310; that stretch reads AVAVVALIIN…LTNVTSQFQR (283 aa). The region spanning 342 to 578 is the ABC transporter domain; sequence VNVKDISFTY…DGAYAQLHRI (237 aa). Residue 376–383 coordinates ATP; sequence GRSGSGKS.

It belongs to the ABC transporter superfamily. Lipid exporter (TC 3.A.1.106) family. Homodimer.

It localises to the cell inner membrane. It catalyses the reaction ATP + H2O + lipid A-core oligosaccharideSide 1 = ADP + phosphate + lipid A-core oligosaccharideSide 2.. Involved in lipopolysaccharide (LPS) biosynthesis. Translocates lipid A-core from the inner to the outer leaflet of the inner membrane. Transmembrane domains (TMD) form a pore in the inner membrane and the ATP-binding domain (NBD) is responsible for energy generation. This chain is ATP-dependent lipid A-core flippase, found in Vibrio vulnificus (strain YJ016).